The chain runs to 328 residues: Beta-ketoacyl-[acyl-carrier-protein] synthase III (328 aa).

Catalysis depends on residues Cys-113 and His-252. Residues 253 to 257 (QANLR) are ACP-binding. Asn-282 is a catalytic residue.

The protein belongs to the thiolase-like superfamily. FabH family. As to quaternary structure, homodimer.

Its subcellular location is the cytoplasm. The enzyme catalyses malonyl-[ACP] + acetyl-CoA + H(+) = 3-oxobutanoyl-[ACP] + CO2 + CoA. The protein operates within lipid metabolism; fatty acid biosynthesis. Catalyzes the condensation reaction of fatty acid synthesis by the addition to an acyl acceptor of two carbons from malonyl-ACP. Catalyzes the first condensation reaction which initiates fatty acid synthesis and may therefore play a role in governing the total rate of fatty acid production. Possesses both acetoacetyl-ACP synthase and acetyl transacylase activities. Its substrate specificity determines the biosynthesis of branched-chain and/or straight-chain of fatty acids. The chain is Beta-ketoacyl-[acyl-carrier-protein] synthase III from Campylobacter fetus subsp. fetus (strain 82-40).